The primary structure comprises 482 residues: tRNA sulfurtransferase (482 aa).

The region spanning Asp61–Arg165 is the THUMP domain. Residues Leu183–Ile184, Lys265, Gly287, and Gln296 contribute to the ATP site. A disulfide bridge connects residues Cys344 and Cys456. Residues Leu404–Pro482 form the Rhodanese domain. The active-site Cysteine persulfide intermediate is the Cys456.

Belongs to the ThiI family.

The protein localises to the cytoplasm. It carries out the reaction [ThiI sulfur-carrier protein]-S-sulfanyl-L-cysteine + a uridine in tRNA + 2 reduced [2Fe-2S]-[ferredoxin] + ATP + H(+) = [ThiI sulfur-carrier protein]-L-cysteine + a 4-thiouridine in tRNA + 2 oxidized [2Fe-2S]-[ferredoxin] + AMP + diphosphate. The catalysed reaction is [ThiS sulfur-carrier protein]-C-terminal Gly-Gly-AMP + S-sulfanyl-L-cysteinyl-[cysteine desulfurase] + AH2 = [ThiS sulfur-carrier protein]-C-terminal-Gly-aminoethanethioate + L-cysteinyl-[cysteine desulfurase] + A + AMP + 2 H(+). The protein operates within cofactor biosynthesis; thiamine diphosphate biosynthesis. Its function is as follows. Catalyzes the ATP-dependent transfer of a sulfur to tRNA to produce 4-thiouridine in position 8 of tRNAs, which functions as a near-UV photosensor. Also catalyzes the transfer of sulfur to the sulfur carrier protein ThiS, forming ThiS-thiocarboxylate. This is a step in the synthesis of thiazole, in the thiamine biosynthesis pathway. The sulfur is donated as persulfide by IscS. The sequence is that of tRNA sulfurtransferase from Aliivibrio fischeri (strain ATCC 700601 / ES114) (Vibrio fischeri).